Consider the following 88-residue polypeptide: Small ribosomal subunit protein uS15 (88 aa).

It belongs to the universal ribosomal protein uS15 family. As to quaternary structure, part of the 30S ribosomal subunit. Forms a bridge to the 50S subunit in the 70S ribosome, contacting the 23S rRNA.

One of the primary rRNA binding proteins, it binds directly to 16S rRNA where it helps nucleate assembly of the platform of the 30S subunit by binding and bridging several RNA helices of the 16S rRNA. In terms of biological role, forms an intersubunit bridge (bridge B4) with the 23S rRNA of the 50S subunit in the ribosome. The sequence is that of Small ribosomal subunit protein uS15 from Halothermothrix orenii (strain H 168 / OCM 544 / DSM 9562).